The following is a 326-amino-acid chain: MEMO1 family protein TTHA0924 (326 aa).

The protein belongs to the MEMO1 family.

The sequence is that of MEMO1 family protein TTHA0924 from Thermus thermophilus (strain ATCC 27634 / DSM 579 / HB8).